Reading from the N-terminus, the 790-residue chain is Choline transporter-like 2 (790 aa).

Residues 47 to 67 form a helical membrane-spanning segment; the sequence is PCLFLFVTFLCAWGYVAYYAV. N-linked (GlcNAc...) asparagine glycans are attached at residues Asn102 and Asn259. 3 helical membrane-spanning segments follow: residues 288-308, 319-339, and 344-364; these read IITPYLITIHNITVLLTFQMI, ILVFIACSVLASLILIAMLRW, and LVWISIIGVITALSYGVYYSF. N-linked (GlcNAc...) asparagine glycosylation is present at Asn384. Transmembrane regions (helical) follow at residues 400–420 and 449–469; these read LWILIALSVILIVLLLVVLVL and LVPWILQAVVIVFSLLVLLFL. Asn483 is a glycosylation site (N-linked (GlcNAc...) asparagine). 4 helical membrane-spanning segments follow: residues 545 to 565, 592 to 612, 691 to 711, and 728 to 748; these read VIGFFWCICFVSAFSEMVLAF, VYYHLGTLAFGSLIIAICKII, VTGFLFFLSKLLLASGMAAVT, and FVPAVLVFIGTFIIASIFFSV.

This sequence belongs to the CTL (choline transporter-like) family.

It localises to the membrane. The sequence is that of Choline transporter-like 2 from Anopheles gambiae (African malaria mosquito).